The chain runs to 288 residues: tRNA pseudouridine synthase B (288 aa).

The active-site Nucleophile is the Asp38.

It belongs to the pseudouridine synthase TruB family. Type 1 subfamily.

The enzyme catalyses uridine(55) in tRNA = pseudouridine(55) in tRNA. Functionally, responsible for synthesis of pseudouridine from uracil-55 in the psi GC loop of transfer RNAs. The protein is tRNA pseudouridine synthase B of Carboxydothermus hydrogenoformans (strain ATCC BAA-161 / DSM 6008 / Z-2901).